We begin with the raw amino-acid sequence, 268 residues long: Undecaprenyl-diphosphatase (268 aa).

A run of 7 helical transmembrane segments spans residues 47–67, 83–103, 109–129, 144–164, 184–204, 218–238, and 246–266; these read FAIL…FFKL, FIIG…IAGK, LFDP…LLWV, YPLM…IPGV, AAEF…VYDF, LIAI…KAFL, and FVLF…ALAL.

This sequence belongs to the UppP family.

It localises to the cell inner membrane. The enzyme catalyses di-trans,octa-cis-undecaprenyl diphosphate + H2O = di-trans,octa-cis-undecaprenyl phosphate + phosphate + H(+). Catalyzes the dephosphorylation of undecaprenyl diphosphate (UPP). Confers resistance to bacitracin. This chain is Undecaprenyl-diphosphatase, found in Bradyrhizobium sp. (strain ORS 278).